Reading from the N-terminus, the 149-residue chain is Large ribosomal subunit protein uL13 (149 aa).

The protein belongs to the universal ribosomal protein uL13 family. In terms of assembly, part of the 50S ribosomal subunit.

This protein is one of the early assembly proteins of the 50S ribosomal subunit, although it is not seen to bind rRNA by itself. It is important during the early stages of 50S assembly. This Saccharolobus solfataricus (strain ATCC 35092 / DSM 1617 / JCM 11322 / P2) (Sulfolobus solfataricus) protein is Large ribosomal subunit protein uL13.